Here is a 146-residue protein sequence, read N- to C-terminus: Prolactin-inducible protein homolog (146 aa).

The first 26 residues, 1-26, serve as a signal peptide directing secretion; that stretch reads MQGLSFTFSAVTLFLVLCLQLGIIES. At Gln-27 the chain carries Pyrrolidone carboxylic acid. 2 cysteine pairs are disulfide-bonded: Cys-65/Cys-91 and Cys-89/Cys-123.

This sequence belongs to the PIP family. As to quaternary structure, monomer. Interacts with AZGP1. As to expression, lacrimal and submaxillary glands.

It is found in the secreted. This chain is Prolactin-inducible protein homolog (Pip), found in Mus musculus (Mouse).